The chain runs to 1873 residues: Voltage-dependent L-type calcium channel subunit alpha-1S (1873 aa).

Residues Met1–Ile23 form a disordered region. The Cytoplasmic portion of the chain corresponds to Met1–Lys51. The I repeat unit spans residues Asn38–Phe337. The chain crosses the membrane as a helical span at residues Pro52 to Val70. The Extracellular segment spans residues Tyr71–Gly85. N-linked (GlcNAc...) asparagine glycosylation occurs at Asn79. A helical transmembrane segment spans residues Leu86 to Ile106. Topologically, residues Ala107–Asp115 are cytoplasmic. Residues Ala116–Thr136 traverse the membrane as a helical segment. Residues Val137–Asp160 lie on the Extracellular side of the membrane. Residues Val161 to Val179 form a helical membrane-spanning segment. Over Pro180 to Leu196 the chain is Cytoplasmic. Residues Phe197–Phe218 form a helical membrane-spanning segment. Residues Lys219–Gly279 lie on the Extracellular side of the membrane. Cystine bridges form between Cys226-Cys254 and Cys245-Cys261. The N-linked (GlcNAc...) asparagine glycan is linked to Asn257. Positions Phe280–Val301 form an intramembrane region, pore-forming. Residues Thr290–Gly293 carry the Selectivity filter of repeat I motif. A Ca(2+)-binding site is contributed by Glu292. The Extracellular segment spans residues Asn302–Trp309. Residues Pro310–Leu330 traverse the membrane as a helical segment. Residues Gly331–Lys432 are Cytoplasmic-facing. Positions Gln357 to Glu374 are binding to the beta subunit. Phosphoserine is present on residues Ser393 and Ser397. Residues Asn418–Leu664 form an II repeat. Residues Val433 to Ser451 form a helical membrane-spanning segment. Residues Glu452–Arg462 are Extracellular-facing. Residues Leu463–Met483 traverse the membrane as a helical segment. Residues Tyr484–Ser494 lie on the Cytoplasmic side of the membrane. The helical transmembrane segment at Ile495–Val514 threads the bilayer. Residues Glu515–Gly523 are Extracellular-facing. A helical transmembrane segment spans residues Ile524–Trp542. The Cytoplasmic portion of the chain corresponds to Thr543–Ser561. A helical membrane pass occupies residues Leu562–Phe581. Residues Gly582–Pro601 are Extracellular-facing. Positions Gln602–Gly623 form an intramembrane region, pore-forming. Positions Thr612 to Asp615 match the Selectivity filter of repeat II motif. Glu614 is a Ca(2+) binding site. Over Ile624–Pro633 the chain is Extracellular. Residues Gly634–Leu653 traverse the membrane as a helical segment. At Asn654–Thr799 the chain is on the cytoplasmic side. Disordered stretches follow at residues Lys675–Thr717 and Glu731–Arg757. Ser687 carries the post-translational modification Phosphoserine; by PKA. Positions Leu690–Gly711 are enriched in basic and acidic residues. The segment covering Pro742–Glu751 has biased composition (acidic residues). The interaction with STAC, STAC2 and STAC3 (via SH3 domains) stretch occupies residues Glu747–Pro760. An III repeat occupies Asn786–Phe1068. The chain crosses the membrane as a helical span at residues Trp800 to Ala818. The Extracellular segment spans residues Glu819–Gln830. The helical transmembrane segment at Ile831–Lys850 threads the bilayer. Residues Met851–Asn866 lie on the Cytoplasmic side of the membrane. A helical membrane pass occupies residues Tyr867–Leu885. The Extracellular portion of the chain corresponds to Glu886–Val892. A helical transmembrane segment spans residues Val893–Ala911. The Cytoplasmic portion of the chain corresponds to Lys912–Asn930. The helical transmembrane segment at Ile931 to Phe950 threads the bilayer. Topologically, residues Lys951–Val1000 are extracellular. Residues Cys957 and Cys968 are joined by a disulfide bond. Positions Arg988–Lys1077 are dihydropyridine binding. Residues Leu1001–Tyr1021 constitute an intramembrane region (pore-forming). Residues Thr1012 to Gly1015 carry the Selectivity filter of repeat III motif. Glu1014 contacts Ca(2+). Topologically, residues Lys1022 to Arg1038 are extracellular. The chain crosses the membrane as a helical span at residues Val1039–Phe1060. Residues Val1061–Ser1118 are Cytoplasmic-facing. The stretch at Asn1105–Phe1384 is one IV repeat. The chain crosses the membrane as a helical span at residues Tyr1119 to Tyr1140. N-linked (GlcNAc...) asparagine glycosylation occurs at Asn1141. Topologically, residues Asn1141–His1148 are extracellular. A helical transmembrane segment spans residues Ile1149–Met1170. Over Ala1171 to Asp1180 the chain is Cytoplasmic. The chain crosses the membrane as a helical span at residues Pro1181–Ser1200. At Glu1201–Ser1231 the chain is on the extracellular side. A helical transmembrane segment spans residues Ser1232–Ala1250. Residues Glu1251–Pro1268 are Cytoplasmic-facing. The helical transmembrane segment at Tyr1269–Phe1289 threads the bilayer. Topologically, residues Gly1290–Gln1311 are extracellular. Residues Ala1312–Leu1330 constitute an intramembrane region (pore-forming). The Selectivity filter of repeat IV motif lies at Thr1321–Ala1324. The Extracellular portion of the chain corresponds to Ala1331–Phe1356. Residues Leu1337–Lys1403 are dihydropyridine binding. A disulfide bridge links Cys1338 with Cys1352. Positions Glu1349–Trp1391 are phenylalkylamine binding. Residues Ala1357 to Met1381 traverse the membrane as a helical segment. Residues Asp1382–Leu1873 are Cytoplasmic-facing. Residues Lys1522 to Glu1542 are interaction with calmodulin. Phosphoserine; by PKA and CAMK2 is present on Ser1575. The residue at position 1617 (Ser1617) is a Phosphoserine; by PKA. Residues Met1731–Ser1780 form a disordered region. Residues Pro1751 to Thr1776 show a composition bias toward basic and acidic residues.

It belongs to the calcium channel alpha-1 subunit (TC 1.A.1.11) family. CACNA1S subfamily. As to quaternary structure, component of a calcium channel complex consisting of a pore-forming alpha subunit (CACNA1S) and the ancillary subunits CACNB1 or CACNB2, CACNG1 and CACNA2D1. The channel complex contains alpha, beta, gamma and delta subunits in a 1:1:1:1 ratio, i.e. it contains either CACNB1 or CACNB2. CACNA1S channel activity is modulated by the auxiliary subunits (CACNB1 or CACNB2, CACNG1 and CACNA2D1). Interacts with DYSF and JSRP1. Interacts with RYR1. Interacts with STAC, STAC2 and STAC3 (via their SH3 domains). Interacts with CALM. Post-translationally, the alpha-1S subunit is found in two isoforms in the skeletal muscle: a minor form of 212 kDa containing the complete amino acid sequence, and a major form of 190 kDa derived from the full-length form by post-translational proteolysis close to Phe-1690. Phosphorylated. Phosphorylation by PKA activates the calcium channel. Both the minor and major forms are phosphorylated in vitro by PKA. Phosphorylation at Ser-1575 is involved in beta-adrenergic-mediated regulation of the channel. Skeletal muscle specific.

The protein localises to the cell membrane. The protein resides in the sarcolemma. It is found in the T-tubule. It carries out the reaction Ca(2+)(in) = Ca(2+)(out). Channel activity is blocked by dihydropyridines (DHP), phenylalkylamines, and by benzothiazepines. Its function is as follows. Pore-forming, alpha-1S subunit of the voltage-gated calcium channel that gives rise to L-type calcium currents in skeletal muscle. Calcium channels containing the alpha-1S subunit play an important role in excitation-contraction coupling in skeletal muscle via their interaction with RYR1, which triggers Ca(2+) release from the sarcoplasmic reticulum and ultimately results in muscle contraction. Long-lasting (L-type) calcium channels belong to the 'high-voltage activated' (HVA) group. The protein is Voltage-dependent L-type calcium channel subunit alpha-1S (CACNA1S) of Homo sapiens (Human).